Reading from the N-terminus, the 421-residue chain is Alpha-1-antitrypsin-related protein (421 aa).

Residues 1-21 (MPFSVSWGILLLAGLCCLVPS) form the signal peptide. N-linked (GlcNAc...) asparagine glycosylation is found at asparagine 56, asparagine 110, asparagine 148, and asparagine 274.

It belongs to the serpin family. In terms of assembly, interacts with CANX and PDIA3. In terms of processing, glycosylated. Expressed in the liver, leukocytes and testis. Also detected in brain, colon, uterus, esophagus, spleen, trachea, kidney and lung.

It localises to the endoplasmic reticulum. Putative serine protease inhibitor. This chain is Alpha-1-antitrypsin-related protein (SERPINA2), found in Homo sapiens (Human).